The following is a 117-amino-acid chain: Large ribosomal subunit protein uL18 (117 aa).

It belongs to the universal ribosomal protein uL18 family. Part of the 50S ribosomal subunit; part of the 5S rRNA/L5/L18/L25 subcomplex. Contacts the 5S and 23S rRNAs.

In terms of biological role, this is one of the proteins that bind and probably mediate the attachment of the 5S RNA into the large ribosomal subunit, where it forms part of the central protuberance. The polypeptide is Large ribosomal subunit protein uL18 (Azoarcus sp. (strain BH72)).